Reading from the N-terminus, the 89-residue chain is YcgL domain-containing protein Asuc_1390 (89 aa).

A YcgL domain is found at 1–85 (MLCAIYKSKK…KDDWLFTIEK (85 aa)).

This is YcgL domain-containing protein Asuc_1390 from Actinobacillus succinogenes (strain ATCC 55618 / DSM 22257 / CCUG 43843 / 130Z).